Consider the following 2273-residue polypeptide: Retinal-specific phospholipid-transporting ATPase ABCA4 (2273 aa).

Residues 1-21 (MGFVRQIQLLLWKNWTLRKRQ) lie on the Cytoplasmic side of the membrane. The helical transmembrane segment at 22 to 42 (KIRFVVELVWPLSLFLVLIWL) threads the bilayer. Topologically, residues 43 to 646 (RNANPLYSHH…MPYPCFVDDS (604 aa)) are extracellular. Cystine bridges form between Cys54–Cys81 and Cys75–Cys324. A glycan (N-linked (GlcNAc...) asparagine) is linked at Asn98. Residues Ser336 and Asn338 each coordinate Mg(2+). Cys370 and Cys519 are oxidised to a cystine. Asn415, Asn444, and Asn504 each carry an N-linked (GlcNAc...) asparagine glycan. Residues Arg587 and Arg653 each coordinate an N-all-trans-retinylidenephosphatidylethanolamine. Intrachain disulfides connect Cys641/Cys1490, Cys1444/Cys1455, and Cys1488/Cys1502. A helical membrane pass occupies residues 647-667 (FMIILNRCFPIFMVLAWIYSV). Over 668–699 (SMTVKSIVLEKELRLKETLKNQGVSNAVIWCT) the chain is Cytoplasmic. The helical transmembrane segment at 700–720 (WFLDSFSIMSMSIFLLTIFIM) threads the bilayer. The Extracellular portion of the chain corresponds to 721 to 730 (HGRILHYSDP). A helical membrane pass occupies residues 731 to 751 (FILFLFLLAFSTATIMLCFLL). The Cytoplasmic portion of the chain corresponds to 752 to 759 (STFFSKAS). The helical transmembrane segment at 760–780 (LAAACSGVIYFTLYLPHILCF) threads the bilayer. The Extracellular portion of the chain corresponds to 781-835 (AWQDRMTAELKKAVSLLSPVAFGFGTEYLVRFEEQGLGLQWSNIGNSPTEGDEFS). The helical transmembrane segment at 836–856 (FLLSMQMMLLDAAVYGLLAWY) threads the bilayer. The Cytoplasmic portion of the chain corresponds to 857–1376 (LDQVFPGDYG…IRSHKDFLAQ (520 aa)). The disordered stretch occupies residues 891-911 (ERALEKTEPLTEETEDPEHPE). At Thr901 the chain carries Phosphothreonine. The ABC transporter 1 domain maps to 929-1160 (VCVKNLVKIF…FGTGLYLTLV (232 aa)). Residues Phe938, Gly966, and Lys969 each coordinate ATP. Thr970 provides a ligand contact to Mg(2+). The ATP site is built by Thr971, Gln1010, Lys1054, Gly1064, Gly1065, and His1118. A Phosphoserine modification is found at Ser1185. The interval 1284–1345 (PLFAGGAQQK…EPECPGPQLN (62 aa)) is disordered. Phosphothreonine is present on Thr1313. Ser1317 bears the Phosphoserine mark. Positions 1331–1340 (GQPPPEPECP) are enriched in pro residues. The chain crosses the membrane as a helical span at residues 1377–1397 (IVLPATFVFLALMLSIVIPPF). Residues 1398-1727 (GEYPALTLHP…VSPTTYWVTN (330 aa)) lie on the Extracellular side of the membrane. Asn1469 carries N-linked (GlcNAc...) asparagine glycosylation. N-linked (GlcNAc...) asparagine glycosylation is found at Asn1529, Asn1588, and Asn1662. Residues 1728–1748 (FLWDIMNYSVSAGLVVGIFIG) form a helical membrane-spanning segment. At 1749–1759 (FQKKAYTSPEN) the chain is on the cytoplasmic side. Residues 1760–1780 (LPALVALLLLYGWAVIPMMYP) traverse the membrane as a helical segment. The Extracellular segment spans residues 1781–1792 (ASFLFDVPSTAY). The chain crosses the membrane as a helical span at residues 1793–1813 (VALSCANLFIGINSSAITFIL). At 1814–1831 (ELFENNRTLLRFNAVLRK) the chain is on the cytoplasmic side. The helical transmembrane segment at 1832–1852 (LLIVFPHFCLGRGLIDLALSQ) threads the bilayer. Residues 1853–1873 (AVTDVYARFGEEHSANPFHWD) lie on the Extracellular side of the membrane. The chain crosses the membrane as a helical span at residues 1874–1894 (LIGKNLFAMVVEGVVYFLLTL). Residues 1895–2273 (LVQRHFFLSQ…AAGASRQAQD (379 aa)) are Cytoplasmic-facing. The 233-residue stretch at 1938 to 2170 (LRLHELTKIY…FGDGYIVTMK (233 aa)) folds into the ABC transporter 2 domain. Residues Asn1974, Gly1975, Lys1978, Thr1979, Thr1980, and Gly2073 each contribute to the ATP site. Thr1979 provides a ligand contact to Mg(2+). An essential for ATP binding and ATPase activity region spans residues 2244-2249 (VFVNFA).

Belongs to the ABC transporter superfamily. ABCA family. Post-translationally, proteolytic cleavage by trypsin leads to a 120-kDa N-terminal fragment and a 115-kDa C-terminal fragment that are linked through disulfide bonds. N-glycosylated. In terms of processing, phosphorylation is independent of light exposure and modulates ATPase activity. As to expression, retinal-specific. Seems to be exclusively found in the rims of rod photoreceptor cells.

It localises to the membrane. The protein localises to the endoplasmic reticulum. Its subcellular location is the cytoplasmic vesicle. The protein resides in the cell projection. It is found in the cilium. It localises to the photoreceptor outer segment. It carries out the reaction an N-all-trans-retinylidenephosphatidylethanolamine(out) + ATP + H2O = an N-all-trans-retinylidenephosphatidylethanolamine(in) + ADP + phosphate + H(+). The catalysed reaction is ATP + H2O + phospholipidSide 1 = ADP + phosphate + phospholipidSide 2.. The enzyme catalyses a 1,2-diacyl-sn-glycero-3-phosphoethanolamine(out) + ATP + H2O = a 1,2-diacyl-sn-glycero-3-phosphoethanolamine(in) + ADP + phosphate + H(+). It catalyses the reaction N-11-cis-retinylidenephosphatidylethanolamine(out) + ATP + H2O = N-11-cis-retinylidenephosphatidylethanolamine(in) + ADP + phosphate + H(+). It carries out the reaction ATP + H2O = ADP + phosphate + H(+). Its activity is regulated as follows. ATPase activity is decreased by cholesterol and ceramide. Phospholipids translocase activity is highly reduced by berylium fluoride and aluminum floride. N-ethylmaleimide inhibits phospholipid translocase activity. Its function is as follows. Flippase that catalyzes in an ATP-dependent manner the transport of retinal-phosphatidylethanolamine conjugates like 11-cis and all-trans isomers of N-retinylidene-phosphatidylethanolamine (N-Ret-PE) from the lumen to the cytoplasmic leaflet of photoreceptor outer segment disk membranes, where 11-cis-retinylidene-phosphatidylethanolamine is then isomerized to its all-trans isomer and reduced by RDH8 to produce all-trans-retinol. This transport activity ensures that all-trans-retinal generated from photoexcitation and 11-cis-retinal not needed for the regeneration of rhodopsin and cone opsins are effectively cleared from the photoreceptors, therefore preventing their accumulation and the formation of toxic bisretinoid. Displays ATPase activity in vitro in absence of retinal substrate. May display GTPase activity that is strongly influenced by the lipid environment and the presence of retinoid compounds. Binds the unprotonated form of N-retinylidene-phosphatidylethanolamine with high affinity in the absence of ATP, and ATP binding and hydrolysis induce a protein conformational change that causes N-retinylidene-phosphatidylethanolamine release. The polypeptide is Retinal-specific phospholipid-transporting ATPase ABCA4 (Homo sapiens (Human)).